The chain runs to 62 residues: Small ribosomal subunit protein eS27 (62 aa).

Residues C17, C20, C36, and C39 each contribute to the Zn(2+) site. Residues 17–39 (CNDCENEQIIFGSASRKITCVVC) form a C4-type zinc finger.

It belongs to the eukaryotic ribosomal protein eS27 family. In terms of assembly, part of the 30S ribosomal subunit. It depends on Zn(2+) as a cofactor.

The chain is Small ribosomal subunit protein eS27 from Methanosarcina mazei (strain ATCC BAA-159 / DSM 3647 / Goe1 / Go1 / JCM 11833 / OCM 88) (Methanosarcina frisia).